Consider the following 372-residue polypeptide: Queuine tRNA-ribosyltransferase (372 aa).

Catalysis depends on Asp89, which acts as the Proton acceptor. Substrate-binding positions include 89 to 93 (DSGGF), Asp143, Gln185, and Gly212. Residues 243–249 (GVGKPED) form an RNA binding region. Asp262 serves as the catalytic Nucleophile. The segment at 267-271 (TRNAR) is RNA binding; important for wobble base 34 recognition. Zn(2+) is bound by residues Cys300, Cys302, Cys305, and His331.

Belongs to the queuine tRNA-ribosyltransferase family. As to quaternary structure, homodimer. Within each dimer, one monomer is responsible for RNA recognition and catalysis, while the other monomer binds to the replacement base PreQ1. It depends on Zn(2+) as a cofactor.

It catalyses the reaction 7-aminomethyl-7-carbaguanine + guanosine(34) in tRNA = 7-aminomethyl-7-carbaguanosine(34) in tRNA + guanine. It functions in the pathway tRNA modification; tRNA-queuosine biosynthesis. Its function is as follows. Catalyzes the base-exchange of a guanine (G) residue with the queuine precursor 7-aminomethyl-7-deazaguanine (PreQ1) at position 34 (anticodon wobble position) in tRNAs with GU(N) anticodons (tRNA-Asp, -Asn, -His and -Tyr). Catalysis occurs through a double-displacement mechanism. The nucleophile active site attacks the C1' of nucleotide 34 to detach the guanine base from the RNA, forming a covalent enzyme-RNA intermediate. The proton acceptor active site deprotonates the incoming PreQ1, allowing a nucleophilic attack on the C1' of the ribose to form the product. After dissociation, two additional enzymatic reactions on the tRNA convert PreQ1 to queuine (Q), resulting in the hypermodified nucleoside queuosine (7-(((4,5-cis-dihydroxy-2-cyclopenten-1-yl)amino)methyl)-7-deazaguanosine). In Pseudomonas aeruginosa (strain LESB58), this protein is Queuine tRNA-ribosyltransferase.